The following is a 45-amino-acid chain: Putative UPF0377 protein YJL222W-B (45 aa).

Belongs to the UPF0377 family.

This Saccharomyces cerevisiae (strain ATCC 204508 / S288c) (Baker's yeast) protein is Putative UPF0377 protein YJL222W-B.